We begin with the raw amino-acid sequence, 101 residues long: Iron-sulfur cluster assembly protein CyaY (101 aa).

This sequence belongs to the frataxin family.

Its function is as follows. Involved in iron-sulfur (Fe-S) cluster assembly. May act as a regulator of Fe-S biogenesis. The sequence is that of Iron-sulfur cluster assembly protein CyaY from Actinobacillus pleuropneumoniae serotype 7 (strain AP76).